The primary structure comprises 330 residues: D-alanine--D-alanine ligase (330 aa).

Residues 120 to 326 enclose the ATP-grasp domain; the sequence is KLWLSALDIP…FKQFLEGIIR (207 aa). 150–205 provides a ligand contact to ATP; it reads AFRNWGAVFVKAASQGSSVGCYKVTDAAKLSEAVNAAFGYSDQVLVEKAVRPRELE. Positions 280, 293, and 295 each coordinate Mg(2+).

The protein belongs to the D-alanine--D-alanine ligase family. Requires Mg(2+) as cofactor. Mn(2+) serves as cofactor.

It localises to the cytoplasm. The catalysed reaction is 2 D-alanine + ATP = D-alanyl-D-alanine + ADP + phosphate + H(+). It participates in cell wall biogenesis; peptidoglycan biosynthesis. In terms of biological role, cell wall formation. This chain is D-alanine--D-alanine ligase, found in Tolumonas auensis (strain DSM 9187 / NBRC 110442 / TA 4).